Here is a 76-residue protein sequence, read N- to C-terminus: Small ribosomal subunit protein bS18 (76 aa).

Belongs to the bacterial ribosomal protein bS18 family. As to quaternary structure, part of the 30S ribosomal subunit. Forms a tight heterodimer with protein bS6.

Functionally, binds as a heterodimer with protein bS6 to the central domain of the 16S rRNA, where it helps stabilize the platform of the 30S subunit. The polypeptide is Small ribosomal subunit protein bS18 (Stenotrophomonas maltophilia (strain R551-3)).